Consider the following 279-residue polypeptide: Phycobilisome rod-core linker polypeptide CpcG1 (279 aa).

Residues 11-189 (SSQNQRVEGY…YWRDRQTLNA (179 aa)) form the PBS-linker domain.

This sequence belongs to the phycobilisome linker protein family. As to quaternary structure, part of the phycobilisome, a hemidiscoidal structure that is composed of two distinct substructures: a core complex and a number of rods radiating from the core.

The protein resides in the cellular thylakoid membrane. Its function is as follows. Rod-core linker protein required for attachment of phycocyanin to allophycocyanin in cores of phycobilisomes. Functionally, linker polypeptides determine the state of aggregation and the location of the disk-shaped phycobiliprotein units within the phycobilisome and modulate their spectroscopic properties in order to mediate a directed and optimal energy transfer. The protein is Phycobilisome rod-core linker polypeptide CpcG1 of Nostoc sp. (strain PCC 7120 / SAG 25.82 / UTEX 2576).